Consider the following 258-residue polypeptide: uncharacterized protein (258 aa).

The signal sequence occupies residues 1–20; sequence MKCFQKLYIFILILIVLMAG. Cys21 is lipidated: N-palmitoyl cysteine. A lipid anchor (S-diacylglycerol cysteine) is attached at Cys21.

The protein belongs to the staphylococcal tandem lipoprotein family.

It is found in the cell membrane. This is an uncharacterized protein from Staphylococcus aureus (strain COL).